A 544-amino-acid chain; its full sequence is Neurofilament light polypeptide (544 aa).

The residue at position 2 (Ser2) is an N-acetylserine. The interval 2–87 (SSYSYDPYYT…KIVRTQEKVQ (86 aa)) is head. The 311-residue stretch at 84 to 394 (EKVQLQDLND…KLLEGEETRL (311 aa)) folds into the IF rod domain. The interval 88–119 (LQDLNDRFANFIERVHELEQRNKVLEAELLLL) is coil 1A. The tract at residues 120-132 (RQKHNEPSRLRDM) is linker 1. Residues 133–228 (YEKEVRDVRL…KVHEEELSQL (96 aa)) are coil 1B. The interval 229-246 (QSQVQYAQVSLEVEVAKP) is linker 12. A coil 2A region spans residues 247–265 (DLSSALRDIRGQYEKLAAK). Residues 266–274 (NMQSAEEWF) form a linker 2 region. Positions 275–390 (KSRFTVLTQS…AAYRKLLEGE (116 aa)) are coil 2B. The tract at residues 391-435 (ETRLSFSGVGAITSGYTQSAPVFGRSAYSLQSSSYMTSRAFPTYY) is tail, subdomain A. Positions 391 to 544 (ETRLSFSGVG…EESEKKEKKK (154 aa)) are tail. A tail, subdomain B (acidic) region spans residues 436-544 (SSHVQEEQLD…EESEKKEKKK (109 aa)). Residues 450 to 544 (IESSRAEEAK…EESEKKEKKK (95 aa)) form a disordered region. Basic and acidic residues predominate over residues 451–462 (ESSRAEEAKAEA). The segment covering 463 to 525 (PEEEEEEAAE…EAEGDGEEEG (63 aa)) has biased composition (acidic residues). The segment covering 526 to 544 (ESKGDEAAEEESEKKEKKK) has biased composition (basic and acidic residues).

Belongs to the intermediate filament family. In terms of assembly, forms homodimers (in vitro).

It localises to the cell projection. It is found in the axon. The protein resides in the cytoplasm. The protein localises to the cytoskeleton. Its function is as follows. Neurofilaments usually contain three intermediate filament proteins: NEFL, NEFM, and NEFH which are involved in the maintenance of neuronal caliber. May additionally cooperate with other neuronal intermediate filament proteins to form neuronal filamentous networks. The sequence is that of Neurofilament light polypeptide (nefl) from Xenopus laevis (African clawed frog).